The chain runs to 339 residues: Large ribosomal subunit protein uL11m (339 aa).

This sequence belongs to the universal ribosomal protein uL11 family.

Its subcellular location is the mitochondrion. The polypeptide is Large ribosomal subunit protein uL11m (RPL11) (Acanthamoeba castellanii (Amoeba)).